The sequence spans 612 residues: 1,8-cineole synthase, chloroplastic (612 aa).

The transit peptide at M1–T52 directs the protein to the chloroplast. Residues D363, D367, and D515 each coordinate Mg(2+). Positions D363–D367 match the DDXXD motif motif.

The protein belongs to the terpene synthase family. Tpsd subfamily. Mg(2+) serves as cofactor. The cofactor is Mn(2+).

The protein resides in the plastid. It is found in the chloroplast. The enzyme catalyses (2E)-geranyl diphosphate + H2O = 1,8-cineole + diphosphate. It participates in terpene metabolism; oleoresin biosynthesis. Its function is as follows. Terpene synthase (TPS) involved in the biosynthesis of monoterpene natural products included in conifer oleoresin secretions and volatile emissions; these compounds contribute to biotic and abiotic stress defense against herbivores and pathogens. Catalyzes the conversion of (2E)-geranyl diphosphate (GPP) to 1,8-cineole. The protein is 1,8-cineole synthase, chloroplastic of Picea engelmannii x Picea glauca (Hybrid white spruce).